We begin with the raw amino-acid sequence, 153 residues long: Pheromone-binding protein Gp-9 (153 aa).

The N-terminal stretch at 1–19 is a signal peptide; it reads MKTFVLHIFIFALVAFASA. 3 cysteine pairs are disulfide-bonded: Cys37–Cys77, Cys73–Cys129, and Cys118–Cys138.

The protein belongs to the PBP/GOBP family. In terms of assembly, homodimer.

The protein resides in the secreted. Colony queen number, a major feature of social organization, is associated with worker genotype for Gp-9. Colonies are headed by either a single reproductive queen (monogyne form) or multiple queens (polygyne form). Differences in worker Gp-9 genotypes between social forms may cause differences in workers' abilities to recognize queens and regulate their numbers. This Solenopsis pusillignis (Fire ant) protein is Pheromone-binding protein Gp-9.